The primary structure comprises 187 residues: uncharacterized protein (187 aa).

The N-terminal stretch at 1–28 (MRLHRTNNSRRCTILLILALKIFDFVDT) is a signal peptide. N-linked (GlcNAc...) asparagine glycans are attached at residues asparagine 58, asparagine 70, asparagine 156, and asparagine 168.

Its subcellular location is the secreted. This is an uncharacterized protein from Caenorhabditis elegans.